Consider the following 341-residue polypeptide: Cyanuric acid amidohydrolase (341 aa).

Positions 1–90 (MAPIEILKFP…HVTFFLRSPG (90 aa)) are RU A. Substrate-binding positions include arginine 51 and 71-72 (SG). The tract at residues 95–229 (GLSAAVGHTR…CHILVLASTS (135 aa)) is RU B. Lysine 144 is an active-site residue. Substrate-binding positions include arginine 176 and 212-213 (SS). The active-site Nucleophile is the serine 212. The interval 235 to 341 (LHAVSRPMAD…SLCLVYETSI (107 aa)) is RU C. Glutamate 273 is a Mg(2+) binding site. Substrate-binding positions include arginine 300 and 319–320 (SG). Mg(2+) contacts are provided by alanine 322, glutamine 325, glycine 326, proline 327, and glycine 330.

This sequence belongs to the cyclic amide hydrolase (CyAH) family. Homotetramer.

The enzyme catalyses cyanurate + H2O = 1-carboxybiuret + H(+). It functions in the pathway xenobiotic degradation; atrazine degradation; biuret from cyanurate: step 1/1. Its activity is regulated as follows. Inhibited by barbituric acid. Functionally, responsible for the hydrolysis of cyanuric acid, an intermediate formed during catabolism of s-triazine based compounds in herbicides such as atrazine and polymers such as melamine. Catalyzes the hydrolytic opening of the s-triazine ring of cyanuric acid (2,4,6-trihydroxy-s-triazine) to yield carbon dioxide and carboxybiuret, which spontaneously decarboxylates to biuret. Only active on cyanuric acid and N-methylisocyanuric acid. This chain is Cyanuric acid amidohydrolase, found in Sarocladium sp.